The primary structure comprises 584 residues: MFS-type transporter gkaD (584 aa).

Over residues 1–11 the composition is skewed to low complexity; sequence MAVDTETTTTT. The disordered stretch occupies residues 1–60; that stretch reads MAVDTETTTTTIPVTDSDRIDDQNNLTSNAIPHASEKTVPDSPASEQNEVSDESEDKPSK. Asn25 is a glycosylation site (N-linked (GlcNAc...) asparagine). A run of 8 helical transmembrane segments spans residues 65 to 85, 99 to 119, 134 to 154, 167 to 187, 196 to 216, 223 to 243, 262 to 282, and 293 to 313; these read FGFYAIIVALALTSLLTSLEA, LGGASLYVWVVNGYYLTQTAF, WPMICSAAMFTIGSGVAGGSK, GIGSGGILVLTEIIICDLLPL, MIVSLVGIGAALGPLFGGLIV, WVFYLNVPIGGVACLMLFFFL, WIGNVLFVMSMVSILIALSWA, and VVVPLVLGFVGSAAFVVYEGS. The N-linked (GlcNAc...) asparagine glycan is linked to Asn328. Helical transmembrane passes span 334 to 354, 369 to 389, 398 to 418, 425 to 445, 462 to 482, and 536 to 556; these read AFAVTFLHTLSSVSVMYFLPV, VQLLPTILFMIPGAIAGGTLL, LQHGGLAFMIIGFGLLTLLDA, WVGYQLLGALGTGLALPVLLP, TWSFMRTYGFIWGATIATAVF, and LNVVWYVSLAFAGLGFLLVFL.

The protein belongs to the major facilitator superfamily.

Its subcellular location is the membrane. In terms of biological role, MFS-type transporter; part of the gene cluster that mediates the biosynthesis of GKK1032, fungal natural products containing a macrocyclic para-cyclophane connected to a decahydrofluorene ring system that show potent antitumor activities. The sequence is that of MFS-type transporter gkaD from Penicillium citrinum.